A 198-amino-acid polypeptide reads, in one-letter code: Probable GTP-binding protein EngB (198 aa).

In terms of domain architecture, EngB-type G spans 21-195 (NFSEVAFLGR…EDIIINQTLG (175 aa)). GTP contacts are provided by residues 29–36 (GRSNVGKS), 56–60 (GKTQL), 81–84 (DLPG), 151–154 (TKCD), and 174–176 (VSN). Residues S36 and T58 each contribute to the Mg(2+) site.

It belongs to the TRAFAC class TrmE-Era-EngA-EngB-Septin-like GTPase superfamily. EngB GTPase family. The cofactor is Mg(2+).

Functionally, necessary for normal cell division and for the maintenance of normal septation. This Campylobacter jejuni subsp. jejuni serotype O:2 (strain ATCC 700819 / NCTC 11168) protein is Probable GTP-binding protein EngB.